The primary structure comprises 221 residues: Charged multivesicular body protein 3 (221 aa).

G2 is lipidated: N-myristoyl glycine. Residues 22–54 (KIRKEMRVIDRQIRDIQREEEKVKRSIKDAAKK) are a coiled coil. 2 important for autoinhibitory function regions span residues 59–64 (VCIILA) and 168–169 (IL). Positions 144-221 (LEDTLEGMDD…MQSRLAALRS (78 aa)) form a coiled coil. The segment at 181–221 (PSKVTDLPDPVAIGATAAPEEESEEEEEIEEMQSRLAALRS) is disordered. A compositionally biased stretch (acidic residues) spans 199–211 (PEEESEEEEEIEE). Residues 200-210 (EEESEEEEEIE) carry the MIT-interacting motif motif. Interaction with STAMBP stretches follow at residues 202-206 (ESEEE) and 220-221 (RS).

This sequence belongs to the SNF7 family. Probable core component of the endosomal sorting required for transport complex III (ESCRT-III). ESCRT-III components are thought to multimerize to form a flat lattice on the perimeter membrane of the endosome. Several assembly forms of ESCRT-III may exist that interact and act sequentially.

It localises to the cytoplasm. The protein resides in the cytosol. The protein localises to the membrane. It is found in the endosome. Its subcellular location is the late endosome membrane. Its function is as follows. Probable core component of the endosomal sorting required for transport complex III (ESCRT-III) which is involved in multivesicular bodies (MVBs) formation and sorting of endosomal cargo proteins into MVBs. MVBs contain intraluminal vesicles (ILVs) that are generated by invagination and scission from the limiting membrane of the endosome and mostly are delivered to lysosomes enabling degradation of membrane proteins, such as stimulated growth factor receptors, lysosomal enzymes and lipids. Involved in late stages of cytokinesis. Plays a role in endosomal sorting/trafficking of EGF receptor. The protein is Charged multivesicular body protein 3 (chmp3) of Danio rerio (Zebrafish).